A 177-amino-acid chain; its full sequence is MLKGVSLYLVGMMGSGKSTVGRLLAEKLGYGFVDLDALIEQVSGKRVGEIFEREGEAVFRDLESRVLAEVSAYTRLVVATGGGVVLARRNWGYLHHGVVVWLDADIETLLGRVEHEPGTRPLLAGGDRHLRLVELLGERARLYAQADVRVSAAGLPPAVAEETLRCLAARLAEDSAP.

Residue 14–19 (GSGKST) participates in ATP binding. Mg(2+) is bound at residue Ser18. Asp36, Arg60, and Gly82 together coordinate substrate. Position 120 (Arg120) interacts with ATP. Residue Arg139 participates in substrate binding.

This sequence belongs to the shikimate kinase family. In terms of assembly, monomer. Mg(2+) serves as cofactor.

Its subcellular location is the cytoplasm. It catalyses the reaction shikimate + ATP = 3-phosphoshikimate + ADP + H(+). It participates in metabolic intermediate biosynthesis; chorismate biosynthesis; chorismate from D-erythrose 4-phosphate and phosphoenolpyruvate: step 5/7. In terms of biological role, catalyzes the specific phosphorylation of the 3-hydroxyl group of shikimic acid using ATP as a cosubstrate. The polypeptide is Shikimate kinase (Gloeobacter violaceus (strain ATCC 29082 / PCC 7421)).